Reading from the N-terminus, the 401-residue chain is Subtilisin-like protease 10 (401 aa).

The N-terminal stretch at 1 to 19 (MLFLKAVIAILSVLPAADA) is a signal peptide. Residues 20–116 (AAILNFENKQ…IEPDRMASAQ (97 aa)) constitute a propeptide that is removed on maturation. An Inhibitor I9 domain is found at 35 to 112 (SYIVVLKNDI…QVDYIEPDRM (78 aa)). The 276-residue stretch at 126–401 (SWGLGRISHQ…NRLLYNGSGQ (276 aa)) folds into the Peptidase S8 domain. Residues Asp-158 and His-189 each act as charge relay system in the active site. Asn-250 carries N-linked (GlcNAc...) asparagine glycosylation. The Charge relay system role is filled by Ser-347. Asn-397 is a glycosylation site (N-linked (GlcNAc...) asparagine).

It belongs to the peptidase S8 family.

It localises to the secreted. Functionally, secreted subtilisin-like serine protease with keratinolytic activity that contributes to pathogenicity. This chain is Subtilisin-like protease 10 (SUB10), found in Arthroderma otae (strain ATCC MYA-4605 / CBS 113480) (Microsporum canis).